Reading from the N-terminus, the 460-residue chain is Bifunctional protein GlmU (460 aa).

Residues 1 to 232 form a pyrophosphorylase region; it reads MAISAALILA…PDEIMGVNDR (232 aa). Residues 9-12, lysine 23, glutamine 75, and 80-81 each bind UDP-N-acetyl-alpha-D-glucosamine; these read LAAG and GT. Aspartate 105 serves as a coordination point for Mg(2+). UDP-N-acetyl-alpha-D-glucosamine is bound by residues glycine 142, glutamate 157, asparagine 172, and asparagine 230. Asparagine 230 serves as a coordination point for Mg(2+). The interval 233 to 253 is linker; that stretch reads VQLAHAARVLRQRVNLQLMLA. The tract at residues 254–460 is N-acetyltransferase; it reads GVTLIDPDQT…GWCLKKRDNG (207 aa). UDP-N-acetyl-alpha-D-glucosamine contacts are provided by arginine 336 and lysine 354. Histidine 366 serves as the catalytic Proton acceptor. Residues tyrosine 369 and asparagine 380 each contribute to the UDP-N-acetyl-alpha-D-glucosamine site. Acetyl-CoA is bound by residues 389-390, serine 408, alanine 426, and arginine 443; that span reads NY.

The protein in the N-terminal section; belongs to the N-acetylglucosamine-1-phosphate uridyltransferase family. In the C-terminal section; belongs to the transferase hexapeptide repeat family. As to quaternary structure, homotrimer. It depends on Mg(2+) as a cofactor.

The protein resides in the cytoplasm. It carries out the reaction alpha-D-glucosamine 1-phosphate + acetyl-CoA = N-acetyl-alpha-D-glucosamine 1-phosphate + CoA + H(+). It catalyses the reaction N-acetyl-alpha-D-glucosamine 1-phosphate + UTP + H(+) = UDP-N-acetyl-alpha-D-glucosamine + diphosphate. Its pathway is nucleotide-sugar biosynthesis; UDP-N-acetyl-alpha-D-glucosamine biosynthesis; N-acetyl-alpha-D-glucosamine 1-phosphate from alpha-D-glucosamine 6-phosphate (route II): step 2/2. The protein operates within nucleotide-sugar biosynthesis; UDP-N-acetyl-alpha-D-glucosamine biosynthesis; UDP-N-acetyl-alpha-D-glucosamine from N-acetyl-alpha-D-glucosamine 1-phosphate: step 1/1. It participates in bacterial outer membrane biogenesis; LPS lipid A biosynthesis. In terms of biological role, catalyzes the last two sequential reactions in the de novo biosynthetic pathway for UDP-N-acetylglucosamine (UDP-GlcNAc). The C-terminal domain catalyzes the transfer of acetyl group from acetyl coenzyme A to glucosamine-1-phosphate (GlcN-1-P) to produce N-acetylglucosamine-1-phosphate (GlcNAc-1-P), which is converted into UDP-GlcNAc by the transfer of uridine 5-monophosphate (from uridine 5-triphosphate), a reaction catalyzed by the N-terminal domain. This is Bifunctional protein GlmU from Trichlorobacter lovleyi (strain ATCC BAA-1151 / DSM 17278 / SZ) (Geobacter lovleyi).